Consider the following 508-residue polypeptide: Bestrophin-2 (508 aa).

The Cytoplasmic portion of the chain corresponds to 1–31; it reads MTVTYTARVANARFGGFSQLLLLWRGSIYKL. Ca(2+) is bound at residue Ala10. The chain crosses the membrane as a helical span at residues 32 to 51; the sequence is LWRELLCFLGLYMALSAAYR. The Extracellular segment spans residues 52 to 60; it reads FLLAEEQKR. The helical transmembrane segment at 61–82 threads the bilayer; that stretch reads YFEKLVIYCDQYASLIPVSFVL. At 83–238 the chain is on the cytoplasmic side; it reads GFYVTLVVHR…WISIPLVYTQ (156 aa). The helical transmembrane segment at 239–255 threads the bilayer; the sequence is VVTIAVYSYFLACLIGR. The Extracellular segment spans residues 256–274; that stretch reads QFLDPAQGYKDHTLDLCVP. A helical membrane pass occupies residues 275-288; sequence IFTLLQFFFYAGWL. The Cytoplasmic portion of the chain corresponds to 289-508; sequence KVAEQLINPF…PIGEEEESPA (220 aa). 4 residues coordinate Ca(2+): Gln293, Asn296, Asp301, and Asp304. Residues 455–508 are disordered; the sequence is LREPELEPPACPEPPAPIPGPTPEPFTTVSIPGPRAPAPPWLPSPIGEEEESPA. Composition is skewed to pro residues over residues 461 to 478 and 488 to 497; these read EPPA…PTPE and PRAPAPPWLP.

This sequence belongs to the anion channel-forming bestrophin (TC 1.A.46) family. Calcium-sensitive chloride channel subfamily. Pentamer. Interacts with GLUL; this interaction tethers a fraction of GLUL to the membrane, causing a decrease of cytosolic glutamine synthase (GS) activity and inhibits the chloride channel activity of BEST2 by affecting the gating at the aperture in the absence of intracellular glutamate. As to expression, expressed in mucin-secreting colonic goblet cells.

The protein resides in the cell membrane. The protein localises to the basolateral cell membrane. The catalysed reaction is chloride(in) = chloride(out). The enzyme catalyses hydrogencarbonate(in) = hydrogencarbonate(out). It catalyses the reaction L-glutamate(out) = L-glutamate(in). It carries out the reaction iodide(out) = iodide(in). The catalysed reaction is L-glutamine(out) = L-glutamine(in). Its activity is regulated as follows. Chloride channel activity is allosterically inhibited by GLUL/glutamine synthase (GS) which affects the gating at the aperture in the absence of intracellular glutamate. Inhibitory effect of GLUL is relieved upon increasing of intracellular level of L-glutamate. Its function is as follows. Ligand-gated anion channel that allows the movement of anions across cell membranes when activated by calcium (Ca2+). Transports a large specter of anions, namely mediates the movement of chloride, L-glutamate and iodide. Calcium-binding triggers the dilation of the aperture, but calcium-dependent gating is only effective when the size of the passing anion is bigger than the closed aperture. Mediates the calcium-activated hydrogencarbonate movement and participates in colonic hydrogencarbonate secretion concomitant with mucin secretion. In non-pigmented epithelium (NPE), mediates the efflux of intracellular L-glutamate; binding of intracellular L-glutamate activates and open both the neck and the aperture of the channel, leading to L-glutamate exit promoting chloride influx movement from the extracellular side in trans. Also exhibits a directional permeability for intracellular glutamine, in a similar manner as for L-glutamate. This Mus musculus (Mouse) protein is Bestrophin-2.